Reading from the N-terminus, the 215-residue chain is Probable transaldolase (215 aa).

Lysine 83 serves as the catalytic Schiff-base intermediate with substrate.

It belongs to the transaldolase family. Type 3B subfamily.

The protein localises to the cytoplasm. The enzyme catalyses D-sedoheptulose 7-phosphate + D-glyceraldehyde 3-phosphate = D-erythrose 4-phosphate + beta-D-fructose 6-phosphate. The protein operates within carbohydrate degradation; pentose phosphate pathway; D-glyceraldehyde 3-phosphate and beta-D-fructose 6-phosphate from D-ribose 5-phosphate and D-xylulose 5-phosphate (non-oxidative stage): step 2/3. Transaldolase is important for the balance of metabolites in the pentose-phosphate pathway. The sequence is that of Probable transaldolase from Bdellovibrio bacteriovorus (strain ATCC 15356 / DSM 50701 / NCIMB 9529 / HD100).